A 777-amino-acid polypeptide reads, in one-letter code: NAD(P)H-quinone oxidoreductase subunit 5, chloroplastic (777 aa).

The next 16 helical transmembrane spans lie at 9–29 (WIIP…LLLF), 40–60 (WSFP…YLSI), 89–109 (IDPL…LVLF), 125–145 (FAYL…SNLI), 147–167 (IYIF…FWFT), 185–205 (GDFG…SFEF), 220–240 (NQVH…GAVA), 259–279 (TPIS…FLVA), 290–312 (YIMN…LALA), 328–348 (LGYM…FHLI), 355–375 (ALLF…VGYS), 397–417 (TAFL…CFWS), 426–446 (WLYS…TAFY), 550–570 (LFSL…GIPF), 604–624 (FVTN…IATF), and 731–751 (IFIF…FFVL).

The protein belongs to the complex I subunit 5 family. In terms of assembly, NDH is composed of at least 16 different subunits, 5 of which are encoded in the nucleus.

It localises to the plastid. It is found in the chloroplast thylakoid membrane. The enzyme catalyses a plastoquinone + NADH + (n+1) H(+)(in) = a plastoquinol + NAD(+) + n H(+)(out). It carries out the reaction a plastoquinone + NADPH + (n+1) H(+)(in) = a plastoquinol + NADP(+) + n H(+)(out). Functionally, NDH shuttles electrons from NAD(P)H:plastoquinone, via FMN and iron-sulfur (Fe-S) centers, to quinones in the photosynthetic chain and possibly in a chloroplast respiratory chain. The immediate electron acceptor for the enzyme in this species is believed to be plastoquinone. Couples the redox reaction to proton translocation, and thus conserves the redox energy in a proton gradient. This is NAD(P)H-quinone oxidoreductase subunit 5, chloroplastic (ndhF) from Oenothera elata subsp. hookeri (Hooker's evening primrose).